Reading from the N-terminus, the 339-residue chain is UDP-N-acetylenolpyruvoylglucosamine reductase (339 aa).

Positions 19 to 189 constitute an FAD-binding PCMH-type domain; that stretch reads VDVQARLFAE…LRVRFKLSRV (171 aa). The active site involves R166. The Proton donor role is filled by S239. Residue E335 is part of the active site.

The protein belongs to the MurB family. It depends on FAD as a cofactor.

It is found in the cytoplasm. It carries out the reaction UDP-N-acetyl-alpha-D-muramate + NADP(+) = UDP-N-acetyl-3-O-(1-carboxyvinyl)-alpha-D-glucosamine + NADPH + H(+). It functions in the pathway cell wall biogenesis; peptidoglycan biosynthesis. Cell wall formation. This is UDP-N-acetylenolpyruvoylglucosamine reductase from Pseudomonas savastanoi pv. phaseolicola (strain 1448A / Race 6) (Pseudomonas syringae pv. phaseolicola (strain 1448A / Race 6)).